We begin with the raw amino-acid sequence, 433 residues long: Type I acyl-CoA thioesterase mpaH (433 aa).

Residues 58-246 are abhydrolase domain; it reads HGVGLPKELY…VKARFDAAAD (189 aa). Substrate is bound at residue Val60. The active-site Nucleophile is Ser139. Substrate is bound at residue Phe140. Active-site residues include Asp163 and His365.

It belongs to the AB hydrolase superfamily. MpaH hydrolase family. As to quaternary structure, homodimer.

Its subcellular location is the peroxisome matrix. It catalyses the reaction mycophenolyl-CoA + H2O = mycophenolate + CoA + H(+). Its pathway is secondary metabolite biosynthesis; terpenoid biosynthesis. Its function is as follows. Type I acyl-CoA thioesterase; part of the gene cluster that mediates the biosynthesis of mycophenolic acid (MPA), the first isolated antibiotic natural product in the world obtained from a culture of Penicillium brevicompactum in 1893. MpaH acts as a peroxisomal acyl-CoA hydrolase that converts MPA-CoA into the final product MPA. The first step of the pathway is the synthesis of 5-methylorsellinic acid (5MOA) by the cytosolic polyketide synthase mpaC. 5MOA is then converted to the phthalide compound 5,7-dihydroxy-4,6-dimethylphthalide (DHMP) by the endoplasmic reticulum-bound cytochrome P450 monooxygenase mpaDE. MpaDE first catalyzes hydroxylation of 5-MOA to 4,6-dihydroxy-2-(hydroxymethyl)-3-methylbenzoic acid (DHMB). MpaDE then acts as a lactone synthase that catalyzes the ring closure to convert DHMB into DHMP. The next step is the prenylation of DHMP by the Golgi apparatus-associated prenyltransferase mpaA to yield farnesyl-DHMP (FDHMP). The ER-bound oxygenase mpaB then mediates the oxidative cleavage the C19-C20 double bond in FDHMP to yield FDHMP-3C via a mycophenolic aldehyde intermediate. The O-methyltransferase mpaG catalyzes the methylation of FDHMP-3C to yield MFDHMP-3C. After the cytosolic methylation of FDHMP-3C, MFDHMP-3C enters into peroxisomes probably via free diffusion due to its low molecular weight. Upon a peroxisomal CoA ligation reaction, catalyzed by a beta-oxidation component enzyme acyl-CoA ligase ACL891, MFDHMP-3C-CoA would then be restricted to peroxisomes for the following beta-oxidation pathway steps. The peroxisomal beta-oxidation machinery than converts MFDHMP-3C-CoA into MPA_CoA, via a beta-oxidation chain-shortening process. Finally mpaH acts as a peroxisomal acyl-CoA hydrolase with high substrate specificity toward MPA-CoA to release the final product MPA. The protein is Type I acyl-CoA thioesterase mpaH of Penicillium roqueforti (strain FM164).